We begin with the raw amino-acid sequence, 410 residues long: F-box/WD repeat-containing protein 4 (410 aa).

An F-box domain is found at 23 to 69 (GPALWRLPEELLLLICSYLDTRALGRLAQVCRWLRRFTSCDLLWRPI). 4 WD repeats span residues 159–196 (GHDE…TVKY), 198–235 (AHEQ…LGQC), 289–327 (PPGA…RKCV), and 333–372 (PHDS…CLHA).

Part of a SCF (SKP1-cullin-F-box) protein ligase complex. Interacts with POUF51.

Functionally, probably recognizes and binds to some phosphorylated proteins and promotes their ubiquitination and degradation. Likely to be involved in key signaling pathways crucial for normal limb development. May participate in Wnt signaling. In Mus musculus (Mouse), this protein is F-box/WD repeat-containing protein 4 (Fbxw4).